Here is a 105-residue protein sequence, read N- to C-terminus: Large ribosomal subunit protein bL21 (105 aa).

Belongs to the bacterial ribosomal protein bL21 family. Part of the 50S ribosomal subunit. Contacts protein L20.

Functionally, this protein binds to 23S rRNA in the presence of protein L20. This chain is Large ribosomal subunit protein bL21, found in Natranaerobius thermophilus (strain ATCC BAA-1301 / DSM 18059 / JW/NM-WN-LF).